A 364-amino-acid chain; its full sequence is uncharacterized protein (364 aa).

This is an uncharacterized protein from Acanthamoeba polyphaga mimivirus (APMV).